A 53-amino-acid polypeptide reads, in one-letter code: Large ribosomal subunit protein eL40 (53 aa).

This sequence belongs to the eukaryotic ribosomal protein eL40 family.

The sequence is that of Large ribosomal subunit protein eL40 from Pyrobaculum aerophilum (strain ATCC 51768 / DSM 7523 / JCM 9630 / CIP 104966 / NBRC 100827 / IM2).